A 1828-amino-acid polypeptide reads, in one-letter code: AT-rich interactive domain-containing protein 2 (1828 aa).

The residue at position 2 (alanine 2) is an N-acetylalanine. Serine 4 carries the post-translational modification Phosphoserine. Residues lysine 7, lysine 15, and lysine 119 each participate in a glycyl lysine isopeptide (Lys-Gly) (interchain with G-Cter in SUMO2) cross-link. The ARID domain occupies 13–105 (RRKGLAFLDE…YLEKYEKVHH (93 aa)). An LXXLL motif is present at residues 313–317 (LRFLL). The segment at residues 524-603 (ACQWLNAHFE…IHVIGVKRRA (80 aa)) is a DNA-binding region (RFX-type winged-helix). Residue lysine 555 forms a Glycyl lysine isopeptide (Lys-Gly) (interchain with G-Cter in SUMO2) linkage. 2 positions are modified to phosphoserine: serine 631 and serine 635. Phosphothreonine is present on threonine 653. The residue at position 689 (serine 689) is a Phosphoserine. Position 692 is a phosphothreonine (threonine 692). 6 disordered regions span residues 824–843 (TSPQ…SQPQ), 962–1028 (LTGQ…QVQV), 1245–1339 (KEAT…EPVD), 1360–1462 (KGDG…RPSV), 1483–1503 (HSGP…TNGT), and 1566–1618 (SAAQ…HADP). A compositionally biased stretch (polar residues) spans 987-1011 (AMSSSSTLQSQGPPPTVSQMLSVKR). A compositionally biased stretch (low complexity) spans 1012–1028 (QQQQQHSPAAPAQQVQV). Residues 1245-1259 (KEATGLHVHERKIEV) are compositionally biased toward basic and acidic residues. A compositionally biased stretch (polar residues) spans 1267-1283 (RGTTNTSNGDTSESELQ). Phosphoserine is present on serine 1294. Polar residues-rich tracts occupy residues 1295–1320 (DSSL…SNGP) and 1366–1379 (LSKN…SNHV). Serine 1385 bears the Phosphoserine mark. Composition is skewed to polar residues over residues 1390–1400 (QGTSGATQQDT) and 1419–1428 (GSPSTSSMQE). Residues 1453–1462 (SDVPQQRPSV) show a composition bias toward low complexity. At serine 1491 the chain carries Phosphoserine. 2 stretches are compositionally biased toward polar residues: residues 1491–1503 (SALS…TNGT) and 1567–1586 (AAQQ…APQN). Residues 1594-1614 (AVQVQGQPSSSQPSPVSASSQ) show a composition bias toward low complexity. A C2H2-type zinc finger spans residues 1626 to 1651 (FMCLWQSCKKWFQTPSQVFYHAATEH). Glycyl lysine isopeptide (Lys-Gly) (interchain with G-Cter in SUMO2) cross-links involve residues lysine 1695, lysine 1710, and lysine 1725. A disordered region spans residues 1697-1726 (DEPGQVANQKSSTKQPTVGGTGSAPRAQKA). Polar residues predominate over residues 1702-1714 (VANQKSSTKQPTV).

This sequence belongs to the RFX family. Component of the SWI/SNF-B (PBAF) chromatin remodeling complex, at least composed of SMARCA4/BRG1, SMARCB1/BAF47/SNF5, ACTL6A/BAF53A or ACTL6B/BAF53B, SMARCE1/BAF57, SMARCD1/BAF60A, SMARCD2/BAF60B, perhaps SMARCD3/BAF60C, SMARCC1/BAF155, SMARCC2/BAF170, PBRM1/BAF180, ARID2/BAF200 and actin. Interacts with SRF. Forms complexes with SRF and SRF cofactors MYOCD, NKX2-5 and SRFBP1. Highly expressed in testis, expressed in heart, liver and kidney.

The protein resides in the nucleus. Its function is as follows. Involved in transcriptional activation and repression of select genes by chromatin remodeling (alteration of DNA-nucleosome topology). Required for the stability of the SWI/SNF chromatin remodeling complex SWI/SNF-B (PBAF). May be involved in targeting the complex to different genes. May be involved in regulating transcriptional activation of cardiac genes. This chain is AT-rich interactive domain-containing protein 2, found in Mus musculus (Mouse).